Consider the following 102-residue polypeptide: Ribonuclease P protein component 1 (102 aa).

Belongs to the eukaryotic/archaeal RNase P protein component 1 family. Consists of a catalytic RNA component and at least 4-5 protein subunits.

The protein resides in the cytoplasm. It carries out the reaction Endonucleolytic cleavage of RNA, removing 5'-extranucleotides from tRNA precursor.. Functionally, part of ribonuclease P, a protein complex that generates mature tRNA molecules by cleaving their 5'-ends. This is Ribonuclease P protein component 1 from Archaeoglobus fulgidus (strain ATCC 49558 / DSM 4304 / JCM 9628 / NBRC 100126 / VC-16).